The sequence spans 467 residues: Putative sulfoquinovose importer (467 aa).

Helical transmembrane passes span 17–37 (IAYG…TLYL), 54–74 (IIFL…GFLL), 88–108 (PFIL…FIAT), 121–141 (ALFM…GAMI), 160–180 (GGAT…QSLF), 185–205 (VGYA…MMLC), 238–258 (LLVL…KLAI), 275–295 (WMGF…PLTV), 303–323 (VYLA…FWGS), 325–345 (SFTF…VNSL), 379–399 (ISAA…GYVP), and 414–434 (LIFI…GFFY).

This sequence belongs to the sodium:galactoside symporter (TC 2.A.2) family.

It is found in the cell inner membrane. In terms of biological role, could be involved in sulfoquinovose import. This chain is Putative sulfoquinovose importer (yihO), found in Escherichia coli (strain K12).